The primary structure comprises 86 residues: Cell division topological specificity factor (86 aa).

The protein belongs to the MinE family.

Its function is as follows. Prevents the cell division inhibition by proteins MinC and MinD at internal division sites while permitting inhibition at polar sites. This ensures cell division at the proper site by restricting the formation of a division septum at the midpoint of the long axis of the cell. This chain is Cell division topological specificity factor, found in Stenotrophomonas maltophilia (strain K279a).